The sequence spans 293 residues: NAD-dependent protein deacetylase (293 aa).

Positions 5-282 constitute a Deacetylase sirtuin-type domain; it reads PAHDHHTLQD…LHAPPHLPRA (278 aa). NAD(+) contacts are provided by residues 27-47 and 105-108; these read GAGC…GGWK and QNVD. Histidine 123 (proton acceptor) is an active-site residue. Residues cysteine 131, cysteine 134, cysteine 182, and cysteine 185 each coordinate Zn(2+). NAD(+) contacts are provided by residues 222–224, 248–250, and cysteine 266; these read GSS and NFG.

It belongs to the sirtuin family. Class II subfamily. The cofactor is Zn(2+).

The protein localises to the cytoplasm. The enzyme catalyses N(6)-acetyl-L-lysyl-[protein] + NAD(+) + H2O = 2''-O-acetyl-ADP-D-ribose + nicotinamide + L-lysyl-[protein]. In terms of biological role, NAD-dependent protein deacetylase which modulates the activities of several enzymes which are inactive in their acetylated form. In Xanthomonas axonopodis pv. citri (strain 306), this protein is NAD-dependent protein deacetylase.